The chain runs to 676 residues: Putative Xaa-Pro dipeptidyl-peptidase (676 aa).

Active-site charge relay system residues include S224, D330, and H361. A disordered region spans residues 423-450 (RPGTGTQAGVGTLGLRTGSGTETFTDDP).

It belongs to the peptidase S15 family.

The enzyme catalyses Hydrolyzes Xaa-Pro-|- bonds to release unblocked, N-terminal dipeptides from substrates including Ala-Pro-|-p-nitroanilide and (sequentially) Tyr-Pro-|-Phe-Pro-|-Gly-Pro-|-Ile.. This chain is Putative Xaa-Pro dipeptidyl-peptidase, found in Streptomyces avermitilis (strain ATCC 31267 / DSM 46492 / JCM 5070 / NBRC 14893 / NCIMB 12804 / NRRL 8165 / MA-4680).